Here is a 157-residue protein sequence, read N- to C-terminus: Glutaredoxin-2, mitochondrial (157 aa).

The transit peptide at 1–18 (MYWRRAALVGTRLIPVRS) directs the protein to the mitochondrion. Position 20 is a phosphoserine (Ser-20). One can recognise a Glutaredoxin domain in the interval 51 to 151 (VNQIQETISN…PLVHQCHLKN (101 aa)). Cys-62 provides a ligand contact to [2Fe-2S] cluster. Residue Lys-68 participates in glutathione binding. Cys-71 bears the S-glutathionyl cysteine; alternate mark. Residues Cys-71 and Cys-74 are joined by a disulfide bond. 2 residues coordinate glutathione: Gln-103 and Val-115. Residue Cys-147 participates in [2Fe-2S] cluster binding.

It belongs to the glutaredoxin family. Monomer; active form. Homodimer; inactive form. The homodimer is probably linked by 1 2Fe-2S cluster.

It localises to the mitochondrion. The 2Fe-2S present in the homodimer leads to inactivation of the enzyme. The 2Fe-2S may serve as a redox sensor: the presence of one-electron oxidants or reductants leading to the loss of the 2Fe-2S cluster, subsequent monomerization and activation of the enzyme. Functionally, glutathione-dependent oxidoreductase that facilitates the maintenance of mitochondrial redox homeostasis upon induction of apoptosis by oxidative stress. Involved in response to hydrogen peroxide and regulation of apoptosis caused by oxidative stress. Acts as a very efficient catalyst of monothiol reactions because of its high affinity for protein glutathione-mixed disulfides. Can receive electrons not only from glutathione (GSH), but also from thioredoxin reductase supporting both monothiol and dithiol reactions. Efficiently catalyzes both glutathionylation and deglutathionylation of mitochondrial complex I, which in turn regulates the superoxide production by the complex. Overexpression decreases the susceptibility to apoptosis and prevents loss of cardiolipin and cytochrome c release. In Bos taurus (Bovine), this protein is Glutaredoxin-2, mitochondrial (GLRX2).